We begin with the raw amino-acid sequence, 469 residues long: Soluble pyridine nucleotide transhydrogenase (469 aa).

Residue 39–48 (ERENSVGGGC) coordinates FAD.

This sequence belongs to the class-I pyridine nucleotide-disulfide oxidoreductase family. FAD serves as cofactor.

Its subcellular location is the cytoplasm. The enzyme catalyses NAD(+) + NADPH = NADH + NADP(+). Functionally, conversion of NADPH, generated by peripheral catabolic pathways, to NADH, which can enter the respiratory chain for energy generation. This is Soluble pyridine nucleotide transhydrogenase from Photobacterium profundum (strain SS9).